Consider the following 327-residue polypeptide: AA9 family lytic polysaccharide monooxygenase B (327 aa).

Residues 1 to 19 (MKSFTATALAALLAQQAAA) form the signal peptide. 2 residues coordinate Cu(2+): histidine 20 and histidine 98. Cysteine 68 and cysteine 192 form a disulfide bridge. O2-binding residues include histidine 178 and glutamine 187. Tyrosine 189 is a binding site for Cu(2+). Positions 264-280 (SPTTSLTPPVSTSTPAP) are enriched in low complexity. Residues 264 to 284 (SPTTSLTPPVSTSTPAPGNGG) form a disordered region. Residues 291–327 (CTVQKYGQCGGQGYTGCTTCAAGSTCNTTNQWYHQCV) form the CBM1 domain. Asparagine 317 is a glycosylation site (N-linked (GlcNAc...) asparagine).

It belongs to the polysaccharide monooxygenase AA9 family. Cu(2+) serves as cofactor.

The protein resides in the secreted. The enzyme catalyses [(1-&gt;4)-beta-D-glucosyl]n+m + reduced acceptor + O2 = 4-dehydro-beta-D-glucosyl-[(1-&gt;4)-beta-D-glucosyl]n-1 + [(1-&gt;4)-beta-D-glucosyl]m + acceptor + H2O.. Its function is as follows. Lytic polysaccharide monooxygenase (LPMO) that depolymerizes crystalline and amorphous polysaccharides via the oxidation of scissile alpha- or beta-(1-4)-glycosidic bonds, yielding C1 or C4 oxidation products. Catalysis by LPMOs requires the reduction of the active-site copper from Cu(II) to Cu(I) by a reducing agent and H(2)O(2) or O(2) as a cosubstrate. In Podospora anserina (strain S / ATCC MYA-4624 / DSM 980 / FGSC 10383) (Pleurage anserina), this protein is AA9 family lytic polysaccharide monooxygenase B (LPMO9B).